Here is a 450-residue protein sequence, read N- to C-terminus: Protein tweety homolog 1 (450 aa).

At 1 to 43 (MGAPPGYRPSAWVHLLHQLPRADFQLRPVPSVFAPQEQEYQQA) the chain is on the extracellular side. A helical transmembrane segment spans residues 44 to 64 (LLLVAALAGLGLGLSLIFIAV). At 65–88 (YLIRFCCCRPPEPPGSKIPSPGGG) the chain is on the cytoplasmic side. The chain crosses the membrane as a helical span at residues 89–109 (CVTWSCIVALLAGCTGIGIGF). Residues 110–214 (YGNSETSDGV…NVSFVEEYRW (105 aa)) are Extracellular-facing. Residues N130 and N205 are each glycosylated (N-linked (GlcNAc...) asparagine). A helical transmembrane segment spans residues 215 to 235 (LAYVLLLLLELLVCLFTLLGL). Residues 236-240 (AKQSK) are Cytoplasmic-facing. A helical membrane pass occupies residues 241 to 261 (WLVIVMTVMSLLVLVLSWGSM). The Extracellular portion of the chain corresponds to 262 to 390 (GLEAATAVGL…LRGLCEDALE (129 aa)). Cystine bridges form between C275–C385 and C303–C370. N-linked (GlcNAc...) asparagine glycosylation is found at N284 and N355. The helical transmembrane segment at 391 to 411 (GLLFLLLFSLLSAGALATALC) threads the bilayer. The Cytoplasmic portion of the chain corresponds to 412-450 (SLPRAWALFPPSDDYDDTDDDDPFNPQESKRFVQWQSSI). Positions 428-450 (DTDDDDPFNPQESKRFVQWQSSI) are disordered. S440 carries the phosphoserine modification.

The protein belongs to the tweety family. In terms of assembly, homotetramer; disulfide-linked. Homodimer. Post-translationally, N-glycosylated. Contains high-mannose, hybrid and complex oligosaccharides. As to expression, expressed in brain, eye, ovary and testis, and at lower levels in muscle, placenta, liver and lung.

The protein resides in the cell membrane. The catalysed reaction is chloride(in) = chloride(out). The enzyme catalyses L-glutamate(out) = L-glutamate(in). In terms of biological role, calcium-independent, swelling-dependent volume-regulated anion channel (VRAC-swell) which plays a pivotal role in the process of regulatory volume decrease (RVD) in the brain through the efflux of anions like chloride and organic osmolytes like glutamate. Functionally, ca(2+)-independent, swelling-activated chloride channel, possibly involved in regulation of cell volume. The polypeptide is Protein tweety homolog 1 (TTYH1) (Homo sapiens (Human)).